Consider the following 83-residue polypeptide: Acid shock protein (83 aa).

Residues 1-21 form the signal peptide; that stretch reads MKKVLALVVAAAMGLSSAAFA. Residues 22–40 show a composition bias toward low complexity; the sequence is AETATPAKTATPAKTTQNT. Positions 22–56 are excised as a propeptide; it reads AETATPAKTATPAKTTQNTQHHKKQHKKTVEQKAQ. A disordered region spans residues 22–83; sequence AETATPAKTA…TSKTTSQPAA (62 aa). Basic residues predominate over residues 57–70; that stretch reads AAKKHQKKDGKKAP. The span at 71 to 83 shows a compositional bias: low complexity; the sequence is AKSTSKTTSQPAA.

Belongs to the Asr family. Proteolytic processing gives rise to the active protein.

Its subcellular location is the periplasm. In terms of biological role, required for growth and/or survival at acidic conditions. The sequence is that of Acid shock protein from Salmonella heidelberg (strain SL476).